The chain runs to 213 residues: Amelogenin, X isoform (213 aa).

Residues 1–16 (MGTWILFACLLGAAFS) form the signal peptide. A Phosphoserine modification is found at serine 32. 2 stretches are compositionally biased toward low complexity: residues 96–105 (VPQQPMMPVP) and 114–160 (QHHQ…QPLQ). Residues 96–213 (VPQQPMMPVP…TDKTKREEVD (118 aa)) form a disordered region. Residues 161–194 (PLQPQPPVHPIQPLPPQPPLPPIFPMQPLPPMLP) are compositionally biased toward pro residues.

This sequence belongs to the amelogenin family. As to quaternary structure, interacts with KRT5. In terms of processing, phosphorylated by FAM20C in vitro.

The protein resides in the secreted. It localises to the extracellular space. It is found in the extracellular matrix. Functionally, plays a role in the biomineralization of teeth. Seems to regulate the formation of crystallites during the secretory stage of tooth enamel development. Thought to play a major role in the structural organization and mineralization of developing enamel. This Bos taurus (Bovine) protein is Amelogenin, X isoform (AMELX).